We begin with the raw amino-acid sequence, 404 residues long: Diaminopropionate ammonia-lyase (404 aa).

An N6-(pyridoxal phosphate)lysine modification is found at lysine 78.

This sequence belongs to the diaminopropionate ammonia-lyase family. As to quaternary structure, homodimer. It depends on pyridoxal 5'-phosphate as a cofactor.

The catalysed reaction is (S)-2,3-diaminopropanoate + H2O + H(+) = pyruvate + 2 NH4(+). It catalyses the reaction (R)-2,3-diaminopropanoate + H2O + H(+) = pyruvate + 2 NH4(+). Competitively inhibited by L- and D-alanine. Functionally, catalyzes the alpha,beta-elimination reaction of both L- and D-alpha,beta-diaminopropionate (DAP) to form pyruvate and ammonia. In vitro L- and D-isomers of serine are also degraded, though slowly; it is the only serine dehydratase which can eliminate an amino group at the beta-carbon position. In vivo L-, D- and a mixure of DL-DAP allow growth. DL-DAP is toxic in the absence of this enzyme, it may inhibit enzymes involved in the synthesis of pyruvate and aspartate, as well as amino acids derived from them. The polypeptide is Diaminopropionate ammonia-lyase (dpaL) (Salmonella typhimurium (strain LT2 / SGSC1412 / ATCC 700720)).